Here is a 958-residue protein sequence, read N- to C-terminus: Valine--tRNA ligase (958 aa).

The 'HIGH' region signature appears at 42-52 (PNVTGSLHMGH). Positions 554 to 558 (KMSKS) match the 'KMSKS' region motif. Lys-557 is a binding site for ATP. A coiled-coil region spans residues 887–956 (LVDVAAEMAR…TEQKAEFAKL (70 aa)).

The protein belongs to the class-I aminoacyl-tRNA synthetase family. ValS type 1 subfamily. Monomer.

It localises to the cytoplasm. The catalysed reaction is tRNA(Val) + L-valine + ATP = L-valyl-tRNA(Val) + AMP + diphosphate. In terms of biological role, catalyzes the attachment of valine to tRNA(Val). As ValRS can inadvertently accommodate and process structurally similar amino acids such as threonine, to avoid such errors, it has a 'posttransfer' editing activity that hydrolyzes mischarged Thr-tRNA(Val) in a tRNA-dependent manner. The protein is Valine--tRNA ligase of Shewanella oneidensis (strain ATCC 700550 / JCM 31522 / CIP 106686 / LMG 19005 / NCIMB 14063 / MR-1).